Reading from the N-terminus, the 294-residue chain is Small ribosomal subunit protein uS2 (294 aa).

The protein belongs to the universal ribosomal protein uS2 family.

This Mycoplasma pneumoniae (strain ATCC 29342 / M129 / Subtype 1) (Mycoplasmoides pneumoniae) protein is Small ribosomal subunit protein uS2 (rpsB).